Consider the following 4244-residue polypeptide: Tenascin-X (4244 aa).

Residues 1-23 (MMPAQYALTSSLVLLVLLSTARA) form the signal peptide. The tract at residues 27–57 (SSRSNVTLPAPRPPPQPGGHTVGAGVGSPSS) is disordered. N-linked (GlcNAc...) asparagine glycosylation occurs at asparagine 31. Positions 156–168 (CSCEPGWGGPTCS) constitute an EGF-like 1; incomplete domain. Positions 169 to 189 (DPTDAEIPPSSPPSASGSCPD) are disordered. 18 EGF-like domains span residues 183–213 (ASGS…GPSC), 214–244 (GWPS…GPDC), 245–275 (SQRS…GDDC), 276–306 (GMRS…GEDC), 307–337 (GVRS…GEDC), 338–368 (GTRS…GEDC), 369–399 (STRT…GDDC), 400–430 (GVRS…GTDC), 431–461 (GSRA…GEDC), 462–492 (GVRS…GRDC), 493–523 (GTRA…GEDC), 524–554 (GSRR…GEDC), 555–585 (STRS…GEDC), 586–616 (GVRQ…SEDC), 617–647 (SIRT…GPTC), 648–679 (ATRM…EDCG), 684–714 (PASA…GPDC), and 715–746 (AIQT…EDCG). Intrachain disulfides connect cysteine 187-cysteine 197, cysteine 191-cysteine 202, cysteine 204-cysteine 213, cysteine 218-cysteine 228, cysteine 222-cysteine 233, cysteine 235-cysteine 244, cysteine 249-cysteine 259, cysteine 253-cysteine 264, cysteine 266-cysteine 275, cysteine 280-cysteine 290, cysteine 284-cysteine 295, cysteine 297-cysteine 306, cysteine 311-cysteine 321, cysteine 315-cysteine 326, cysteine 328-cysteine 337, cysteine 342-cysteine 352, cysteine 346-cysteine 357, cysteine 359-cysteine 368, cysteine 373-cysteine 383, cysteine 377-cysteine 388, cysteine 390-cysteine 399, cysteine 404-cysteine 414, cysteine 408-cysteine 419, cysteine 421-cysteine 430, cysteine 435-cysteine 445, cysteine 439-cysteine 450, cysteine 452-cysteine 461, cysteine 466-cysteine 476, cysteine 470-cysteine 481, cysteine 483-cysteine 492, cysteine 497-cysteine 507, cysteine 501-cysteine 512, cysteine 514-cysteine 523, cysteine 528-cysteine 538, cysteine 532-cysteine 543, cysteine 545-cysteine 554, cysteine 559-cysteine 569, cysteine 563-cysteine 574, cysteine 576-cysteine 585, cysteine 590-cysteine 600, cysteine 594-cysteine 605, cysteine 607-cysteine 616, cysteine 621-cysteine 631, cysteine 625-cysteine 636, cysteine 638-cysteine 647, cysteine 652-cysteine 662, cysteine 656-cysteine 667, cysteine 669-cysteine 678, cysteine 688-cysteine 698, cysteine 692-cysteine 703, cysteine 705-cysteine 714, cysteine 719-cysteine 729, cysteine 723-cysteine 734, and cysteine 736-cysteine 745. Residues 926–956 (TGSSPLGLLGTTDEPPPSGPSTTQGAQAPLL) form a disordered region. Fibronectin type-III domains are found at residues 959–1051 (RPQE…IMDK), 1064–1153 (RLGE…PQSD), 1161–1249 (HLGN…APER), 1263–1352 (LLGE…PQED), 1374–1468 (LLGE…TPPA), 1476–1572 (RLGE…TEAS), 1574–1669 (PPLE…RGDA), 1674–1764 (PPRL…ARSA), 1778–1868 (LGEE…REET), and 1883–1971 (HLGE…VPEE). A disordered region spans residues 1340–1372 (PESVVAKTAPQEDVDETPSPTELGTEAPESPEE). Residues 1666 to 1668 (RGD) carry the Cell attachment site motif. Residues 1752–1777 (PLTADGTTEARSAMDDTGTKRPPKPR) are disordered. Residues 1968 to 1990 (VPEEEKPSEPPTATPEPPIKPRL) are disordered. Residues 1976-1987 (EPPTATPEPPIK) show a composition bias toward pro residues. 5 Fibronectin type-III domains span residues 1989–2089 (RLGE…SMEA), 2097–2185 (LLGE…APEE), 2196–2296 (RLGQ…TEPP), 2305–2398 (RLEE…TPSP), and 2408–2502 (PPEE…PQED). Positions 2281–2304 (APGKDEEMAPASTEPPTPEPPIKP) are disordered. The interval 2495–2542 (GVTAPQEDVDETPSPTEPGTEAPGPPEEPLLGELTVTGSSPDSLSLSW) is disordered. A compositionally biased stretch (low complexity) spans 2506 to 2516 (TPSPTEPGTEA). Fibronectin type-III domains follow at residues 2519-2617 (PPEE…TTQA), 2625-2723 (PPIK…TPSP), 2733-2840 (PPEE…TTPE), 2841-2939 (PPNK…TPAP), 2949-3042 (PPEE…APKD), 3062-3153 (RLGE…TPSP), 3168-3260 (LLGE…TPLP), 3264-3355 (RLGE…TKPS), 3357-3446 (RLGE…PLEK), 3451-3544 (HLGE…TPAP), 3553-3647 (PPEE…LAPA), 3657-3754 (RLSQ…TLSP), 3758-3847 (SPRD…VPDG), 3848-3934 (PTQL…TGLE), and 3935-4025 (APRD…LRIP). Residues 2530-2542 (VTGSSPDSLSLSW) show a composition bias toward polar residues. Disordered stretches follow at residues 2824 to 2847 (PEDE…KPRL) and 2933 to 2969 (EEET…DSLS). A compositionally biased stretch (low complexity) spans 2937–2946 (PAPTEPSTEA). Residues 2960–2969 (VTGSSPDSLS) show a composition bias toward polar residues. 2 disordered regions span residues 3536–3559 (APEE…EPRL) and 3636–3662 (LSAE…SQLS). N-linked (GlcNAc...) asparagine glycans are attached at residues asparagine 3855, asparagine 3908, and asparagine 3920. One can recognise a Fibrinogen C-terminal domain in the interval 4021–4236 (GLRIPFPRDC…FTEMKLRPRN (216 aa)). The cysteines at positions 4030 and 4060 are disulfide-linked. N-linked (GlcNAc...) asparagine glycosylation is present at asparagine 4095. Cysteine 4182 and cysteine 4195 are disulfide-bonded.

It belongs to the tenascin family. Homotrimer. Interacts with type I, III and V collagens and tropoelastin via its 29th fibronectin type-III domain. As to expression, highly expressed in fetal adrenal, in fetal testis, fetal smooth, striated and cardiac muscle. Isoform XB-short is only expressed in the adrenal gland.

The protein localises to the secreted. The protein resides in the extracellular space. It localises to the extracellular matrix. In terms of biological role, appears to mediate interactions between cells and the extracellular matrix. Substrate-adhesion molecule that appears to inhibit cell migration. Accelerates collagen fibril formation. May play a role in supporting the growth of epithelial tumors. The sequence is that of Tenascin-X from Homo sapiens (Human).